Reading from the N-terminus, the 544-residue chain is Chaperonin GroEL 1 (544 aa).

ATP contacts are provided by residues 30–33 (TLGP), 87–91 (DGTTT), G415, 480–482 (NAA), and D496.

Belongs to the chaperonin (HSP60) family. Forms a cylinder of 14 subunits composed of two heptameric rings stacked back-to-back. Interacts with the co-chaperonin GroES.

The protein resides in the cytoplasm. It carries out the reaction ATP + H2O + a folded polypeptide = ADP + phosphate + an unfolded polypeptide.. Functionally, together with its co-chaperonin GroES, plays an essential role in assisting protein folding. The GroEL-GroES system forms a nano-cage that allows encapsulation of the non-native substrate proteins and provides a physical environment optimized to promote and accelerate protein folding. The sequence is that of Chaperonin GroEL 1 from Polaromonas naphthalenivorans (strain CJ2).